The following is a 273-amino-acid chain: Putative pyruvate, phosphate dikinase regulatory protein (273 aa).

149 to 156 (GPSRTSKT) contributes to the ADP binding site.

It belongs to the pyruvate, phosphate/water dikinase regulatory protein family. PDRP subfamily.

It catalyses the reaction N(tele)-phospho-L-histidyl/L-threonyl-[pyruvate, phosphate dikinase] + ADP = N(tele)-phospho-L-histidyl/O-phospho-L-threonyl-[pyruvate, phosphate dikinase] + AMP + H(+). The catalysed reaction is N(tele)-phospho-L-histidyl/O-phospho-L-threonyl-[pyruvate, phosphate dikinase] + phosphate + H(+) = N(tele)-phospho-L-histidyl/L-threonyl-[pyruvate, phosphate dikinase] + diphosphate. In terms of biological role, bifunctional serine/threonine kinase and phosphorylase involved in the regulation of the pyruvate, phosphate dikinase (PPDK) by catalyzing its phosphorylation/dephosphorylation. This chain is Putative pyruvate, phosphate dikinase regulatory protein, found in Rickettsia bellii (strain RML369-C).